The chain runs to 931 residues: Netrin receptor UNC5C (931 aa).

The signal sequence occupies residues 1–39 (MGKGLEGTAARCGLGMGYLLHSVVLPALAVLGASRPGSA). Residues 40–380 (AQDDDFFHEL…APDSDDVALY (341 aa)) lie on the Extracellular side of the membrane. The region spanning 62–159 (PHFLIEPEEA…AGTTKSRKAY (98 aa)) is the Ig-like domain. 9 cysteine pairs are disulfide-bonded: cysteine 83/cysteine 144, cysteine 95/cysteine 142, cysteine 188/cysteine 239, cysteine 272/cysteine 309, cysteine 276/cysteine 313, cysteine 287/cysteine 299, cysteine 328/cysteine 362, cysteine 332/cysteine 367, and cysteine 340/cysteine 352. In terms of domain architecture, Ig-like C2-type spans 161–256 (RIAYLRKTFE…KRKSTTATVI (96 aa)). The N-linked (GlcNAc...) asparagine glycan is linked to asparagine 236. TSP type-1 domains follow at residues 260–314 (NGGW…TLCP) and 316–368 (DGKW…GLCM). Asparagine 361 carries an N-linked (GlcNAc...) asparagine glycan. Residues 381–401 (VGIVIAVIVCLAISVVVALFV) traverse the membrane as a helical segment. Residues 402-931 (YRKNHRDFES…VVSLAAEGNY (530 aa)) are Cytoplasmic-facing. The ZU5 domain occupies 530–664 (CTAFGTFNSL…EACHILTETL (135 aa)). A Death domain is found at 850-929 (QKLCSSLDAP…ETVVSLAAEG (80 aa)).

This sequence belongs to the unc-5 family. Restricted to proprioceptive neurons.

The protein resides in the cell membrane. It is found in the cell surface. It localises to the synapse. Its subcellular location is the synaptosome. The protein localises to the cell projection. The protein resides in the axon. It is found in the dendrite. It localises to the growth cone. Its subcellular location is the lamellipodium. The protein localises to the filopodium. Functionally, receptor for netrin required for axon guidance. Mediates axon repulsion of neuronal growth cones in the developing nervous system upon ligand binding. Involved in dorsal root ganglion axon projection towards the spinal cord. This is Netrin receptor UNC5C (UNC5C) from Gallus gallus (Chicken).